The sequence spans 540 residues: Cytochrome P450 monooxygenase CYP3 (540 aa).

Residue Asn2 is glycosylated (N-linked (GlcNAc...) asparagine). The chain crosses the membrane as a helical span at residues 26-46 (IFGLSSSTLVVLVAMIAVSTL). 3 N-linked (GlcNAc...) asparagine glycosylation sites follow: Asn100, Asn210, and Asn400. Position 471 (Cys471) interacts with heme.

This sequence belongs to the cytochrome P450 family. Heme is required as a cofactor.

It is found in the membrane. Its pathway is secondary metabolite biosynthesis. In terms of biological role, cytochrome P450 monooxygenase; part of the gene cluster that mediates the biosynthesis of itaconic acid and 2-hydroxyparaconate. Cis-aconitate is secreted by the mitochondrial tricarboxylate transporter MTT1. In the cytosol cis-aconitate is converted into trans-aconitate via isomerization by the aconitate-delta-isomerase ADI1. Decarboxylation of trans-aconitate by the trans-aconitate decarboxylase TAD1 then leads then to the production of itaconic acid. The cytochrome P450 monooxygenase CYP3 further converts itaconate to 2-hydroxyparaconate via oxidation of the double bond, leading to a transient epoxide, which can subsequently be lactonized to produce 2-hydroxyparaconate. Secretion of itaconate and possibly 2-hydroxyparaconate into the medium is mediated by the major facilitator ITP1. The glyoxalase domain-containing protein RDO1 is not involved in the biosynthesis of itaconate and 2-hydroxyparaconate, however, it might play a role in the further conversion of 2-hydroxyparaconate to itatartarate. The sequence is that of Cytochrome P450 monooxygenase CYP3 from Mycosarcoma maydis (Corn smut fungus).